An 829-amino-acid polypeptide reads, in one-letter code: Probable beta-glucosidase H (829 aa).

N-linked (GlcNAc...) asparagine glycosylation is present at Asn13. Asp225 is a catalytic residue. Residues Asn304, Asn473, Asn602, Asn627, and Asn664 are each glycosylated (N-linked (GlcNAc...) asparagine). A PA14 domain is found at 389 to 548 (RMLSNAVIHF…DPEQMVANAV (160 aa)).

It belongs to the glycosyl hydrolase 3 family.

It is found in the secreted. It carries out the reaction Hydrolysis of terminal, non-reducing beta-D-glucosyl residues with release of beta-D-glucose.. It participates in glycan metabolism; cellulose degradation. Its function is as follows. Beta-glucosidases are one of a number of cellulolytic enzymes involved in the degradation of cellulosic biomass. Catalyzes the last step releasing glucose from the inhibitory cellobiose. This is Probable beta-glucosidase H (bglH) from Neosartorya fischeri (strain ATCC 1020 / DSM 3700 / CBS 544.65 / FGSC A1164 / JCM 1740 / NRRL 181 / WB 181) (Aspergillus fischerianus).